Here is a 177-residue protein sequence, read N- to C-terminus: Phosphatidylglycerol/phosphatidylinositol transfer protein (177 aa).

Residues 1–17 (MRLSAAVIALLSTSAAA) form the signal peptide. The propeptide occupies 18-30 (FSVYRENSVSAND).

Belongs to the NPC2 family. Monomer.

Catalyzes the intermembrane transfer of phosphatidylglycerol and phosphatidylinositol. The chain is Phosphatidylglycerol/phosphatidylinositol transfer protein (npc-2) from Neurospora crassa (strain ATCC 24698 / 74-OR23-1A / CBS 708.71 / DSM 1257 / FGSC 987).